A 489-amino-acid polypeptide reads, in one-letter code: Putative L,D-transpeptidase HI_1667 (489 aa).

The helical transmembrane segment at 10–29 threads the bilayer; that stretch reads LSLFALSLSMMMSGCVLVGL. Residues 254–433 enclose the L,D-TPase catalytic domain; the sequence is NGIFVNIPSY…ETRKNTVLAS (180 aa). His384 functions as the Proton donor/acceptor in the catalytic mechanism. Residue Cys403 is the Nucleophile of the active site.

This sequence belongs to the YkuD family.

It is found in the membrane. The protein operates within cell wall biogenesis; peptidoglycan biosynthesis. In Haemophilus influenzae (strain ATCC 51907 / DSM 11121 / KW20 / Rd), this protein is Putative L,D-transpeptidase HI_1667.